We begin with the raw amino-acid sequence, 236 residues long: Phosphoribosylaminoimidazole-succinocarboxamide synthase (236 aa).

It belongs to the SAICAR synthetase family.

The enzyme catalyses 5-amino-1-(5-phospho-D-ribosyl)imidazole-4-carboxylate + L-aspartate + ATP = (2S)-2-[5-amino-1-(5-phospho-beta-D-ribosyl)imidazole-4-carboxamido]succinate + ADP + phosphate + 2 H(+). Its pathway is purine metabolism; IMP biosynthesis via de novo pathway; 5-amino-1-(5-phospho-D-ribosyl)imidazole-4-carboxamide from 5-amino-1-(5-phospho-D-ribosyl)imidazole-4-carboxylate: step 1/2. The polypeptide is Phosphoribosylaminoimidazole-succinocarboxamide synthase (Pseudomonas paraeruginosa (strain DSM 24068 / PA7) (Pseudomonas aeruginosa (strain PA7))).